The following is a 160-amino-acid chain: Adenosine 5'-monophosphoramidase HINT3 (160 aa).

Residues 24–132 (IFCTIAKGDD…LAPYSQLYKW (109 aa)) enclose the HIT domain. Residues 50–51 (DI) and 119–121 (HLH) contribute to the AMP site. A Histidine triad motif motif is present at residues 117-121 (HLHLH). His119 serves as the catalytic Tele-AMP-histidine intermediate.

This sequence belongs to the HINT family. As to quaternary structure, forms dimers to octamers and even larger oligomer.

It localises to the cytoplasm. Its subcellular location is the nucleus. The enzyme catalyses adenosine 5'-phosphoramidate + H2O = AMP + NH4(+). In terms of biological role, exhibits adenosine 5'-monophosphoramidase activity, hydrolyzing purine nucleotide phosphoramidates with a single phosphate group such as adenosine 5'monophosphoramidate (AMP-NH2) to yield AMP and NH2. Hydrolyzes lysyl-AMP (AMP-N-epsilon-(N-alpha-acetyl lysine methyl ester)) generated by lysine tRNA ligase. The sequence is that of Adenosine 5'-monophosphoramidase HINT3 (hint3) from Danio rerio (Zebrafish).